The primary structure comprises 314 residues: Acetyl-coenzyme A carboxylase carboxyl transferase subunit alpha (314 aa).

The CoA carboxyltransferase C-terminal domain occupies 38–292 (RLERKSAALL…ANAIDEELDA (255 aa)).

It belongs to the AccA family. As to quaternary structure, acetyl-CoA carboxylase is a heterohexamer composed of biotin carboxyl carrier protein (AccB), biotin carboxylase (AccC) and two subunits each of ACCase subunit alpha (AccA) and ACCase subunit beta (AccD).

Its subcellular location is the cytoplasm. It catalyses the reaction N(6)-carboxybiotinyl-L-lysyl-[protein] + acetyl-CoA = N(6)-biotinyl-L-lysyl-[protein] + malonyl-CoA. It functions in the pathway lipid metabolism; malonyl-CoA biosynthesis; malonyl-CoA from acetyl-CoA: step 1/1. Functionally, component of the acetyl coenzyme A carboxylase (ACC) complex. First, biotin carboxylase catalyzes the carboxylation of biotin on its carrier protein (BCCP) and then the CO(2) group is transferred by the carboxyltransferase to acetyl-CoA to form malonyl-CoA. In Erythrobacter litoralis (strain HTCC2594), this protein is Acetyl-coenzyme A carboxylase carboxyl transferase subunit alpha.